Here is a 326-residue protein sequence, read N- to C-terminus: L-lactate dehydrogenase (326 aa).

Residues V20, D41, K46, Y71, and 85–86 contribute to the NAD(+) site; that span reads GA. Q88 and R94 together coordinate substrate. Residues S107, 124 to 126, and S149 each bind NAD(+); that span reads AAN. Residue 126-129 coordinates substrate; sequence NPVD. Substrate is bound at residue 154 to 157; it reads DTAR. Beta-D-fructose 1,6-bisphosphate is bound by residues R159, 171 to 174, and H174; that span reads RSVH. H181 (proton acceptor) is an active-site residue. Y226 is modified (phosphotyrosine). A substrate-binding site is contributed by T235.

It belongs to the LDH/MDH superfamily. LDH family. In terms of assembly, homotetramer.

Its subcellular location is the cytoplasm. The enzyme catalyses (S)-lactate + NAD(+) = pyruvate + NADH + H(+). The protein operates within fermentation; pyruvate fermentation to lactate; (S)-lactate from pyruvate: step 1/1. With respect to regulation, allosterically activated by fructose 1,6-bisphosphate (FBP) alone under acidic conditions, while it requires additional activation factors such as divalent cations (Mn(2+)) under neutral conditions. Under acidic conditions, Mn(2+) is an inhibitor in the absence of fructose 1,6-bisphosphate (FBP). In case of L.casei, L-LDH binds four fructose 1,6-bisphosphate (FBP) molecules per tetramer, while usual allosteric L-LDH binds only two fructose 1,6-bisphosphate (FBP) molecules per tetramer. In terms of biological role, catalyzes the conversion of lactate to pyruvate. In Lacticaseibacillus casei (Lactobacillus casei), this protein is L-lactate dehydrogenase.